The primary structure comprises 452 residues: Nuclear distribution protein nudF 2 (452 aa).

Positions 76 to 101 (ALQILDLESKVAGLQAELSSLTLTSR) form a coiled coil. 7 WD repeats span residues 123 to 164 (SHRD…RTLK), 166 to 206 (HIRA…ANIR), 210 to 250 (GHDH…CVKV), 253 to 292 (SSDAWIRDISSSFDGKWLVAGGRDQAVTVWEVATAEQKSA), 295 to 355 (GHEN…IKTL), 357 to 396 (GHDNWVRDLVFHPNGKHLISVADDKTIRCWDLSQEGKLVK), and 401 to 449 (AHSH…SCVR).

It belongs to the WD repeat LIS1/nudF family. Self-associates. Interacts with nudE and dynein.

It localises to the cytoplasm. Its subcellular location is the cytoskeleton. It is found in the spindle pole. In terms of biological role, positively regulates the activity of the minus-end directed microtubule motor protein dynein. May enhance dynein-mediated microtubule sliding by targeting dynein to the microtubule plus end. Required for nuclear migration during vegetative growth as well as development. Required for retrograde early endosome (EE) transport from the hyphal tip. Required for localization of dynein to the mitotic spindle poles. Recruits additional proteins to the dynein complex at SPBs. This is Nuclear distribution protein nudF 2 from Talaromyces marneffei (strain ATCC 18224 / CBS 334.59 / QM 7333) (Penicillium marneffei).